Reading from the N-terminus, the 227-residue chain is Orotate phosphoribosyltransferase (227 aa).

Residues K51, R119, K120, and K123 each contribute to the 5-phospho-alpha-D-ribose 1-diphosphate site. Orotate contacts are provided by T149 and R177.

It belongs to the purine/pyrimidine phosphoribosyltransferase family. PyrE subfamily. In terms of assembly, homodimer. As to expression, expressed in body wall muscles, spermatheca and vulva muscles.

The enzyme catalyses orotidine 5'-phosphate + diphosphate = orotate + 5-phospho-alpha-D-ribose 1-diphosphate. It carries out the reaction UMP + diphosphate = 5-phospho-alpha-D-ribose 1-diphosphate + uracil. The protein operates within pyrimidine metabolism; UMP biosynthesis via de novo pathway; UMP from orotate: step 1/2. Its pathway is pyrimidine metabolism; UMP biosynthesis via salvage pathway; UMP from uracil: step 1/1. Phosphoribosyltransferase which catalyzes the formation of UMP from uracil in vitro and thus may be involved in UMP biosynthesis via the salvage pathway. May also participate in the first step of UMP synthesis by catalyzing the formation of orotidine 5'-phosphate, a UMP precursor, from orotate. The polypeptide is Orotate phosphoribosyltransferase (Caenorhabditis elegans).